We begin with the raw amino-acid sequence, 615 residues long: Chaperone protein DnaK (615 aa).

Residue Thr-174 is modified to Phosphothreonine; by autocatalysis. Residues 581-615 (QAAPKDGAEGDAKSADDNTVDGDFEEVDPNKDDKK) are disordered. Basic and acidic residues predominate over residues 586–596 (DGAEGDAKSAD). A compositionally biased stretch (acidic residues) spans 598–607 (NTVDGDFEEV).

It belongs to the heat shock protein 70 family.

Its function is as follows. Acts as a chaperone. This is Chaperone protein DnaK from Leuconostoc mesenteroides subsp. mesenteroides (strain ATCC 8293 / DSM 20343 / BCRC 11652 / CCM 1803 / JCM 6124 / NCDO 523 / NBRC 100496 / NCIMB 8023 / NCTC 12954 / NRRL B-1118 / 37Y).